We begin with the raw amino-acid sequence, 328 residues long: YDG domain-containing protein At5g47150 (328 aa).

The YDG domain maps to 176 to 320 (GSVPGINIGD…KSVYKFKLCR (145 aa)).

The protein localises to the nucleus. This chain is YDG domain-containing protein At5g47150, found in Arabidopsis thaliana (Mouse-ear cress).